A 157-amino-acid chain; its full sequence is NADPH-dependent 7-cyano-7-deazaguanine reductase (157 aa).

The Thioimide intermediate role is filled by Cys56. Asp63 (proton donor) is an active-site residue. Substrate contacts are provided by residues 78–80 (VES) and 97–98 (HE).

This sequence belongs to the GTP cyclohydrolase I family. QueF type 1 subfamily.

The protein localises to the cytoplasm. It catalyses the reaction 7-aminomethyl-7-carbaguanine + 2 NADP(+) = 7-cyano-7-deazaguanine + 2 NADPH + 3 H(+). It participates in tRNA modification; tRNA-queuosine biosynthesis. Functionally, catalyzes the NADPH-dependent reduction of 7-cyano-7-deazaguanine (preQ0) to 7-aminomethyl-7-deazaguanine (preQ1). The polypeptide is NADPH-dependent 7-cyano-7-deazaguanine reductase (Parabacteroides distasonis (strain ATCC 8503 / DSM 20701 / CIP 104284 / JCM 5825 / NCTC 11152)).